The sequence spans 112 residues: Protein new-glue 2 (112 aa).

Residues 1-24 form the signal peptide; sequence MKITVVLVLLATFLGCVMIHESEA. Positions 24 to 69 are enriched in low complexity; the sequence is ASTTTTSTSASATTTTSASATTTTSASATTTTSASATTTTASPSSS. The tract at residues 24-112 is disordered; that stretch reads ASTTTTSTSA…RSSRNRRSEE (89 aa). Repeat copies occupy residues 31 to 38, 39 to 46, 47 to 54, and 55 to 62. The interval 31–62 is 4 X 8 AA tandem repeats of T-S-A-S-A-T-T-T; the sequence is TSASATTTTSASATTTTSASATTTTSASATTT. Over residues 70-112 the composition is skewed to basic residues; it reads SKKKTVTHYKRKVKRPKKVRKITRRRGLRSRNGRSSRNRRSEE.

The protein to NG-1, also to SGS-3. As to expression, salivary gland specific.

Its subcellular location is the secreted. The protein is Protein new-glue 2 (ng2) of Drosophila melanogaster (Fruit fly).